The primary structure comprises 375 residues: Deoxyribonuclease-2 (375 aa).

An N-terminal signal peptide occupies residues 1–21 (MGLSPAAVLIFLLLGVSQTYA). N-linked (GlcNAc...) asparagine glycosylation is present at N131.

The protein belongs to the DNase II family.

The enzyme catalyses Endonucleolytic cleavage to nucleoside 3'-phosphates and 3'-phosphooligonucleotide end-products.. Its function is as follows. Hydrolyzes DNA under acidic conditions with a preference for double-stranded DNA. Implicated in apoptosis. This chain is Deoxyribonuclease-2 (nuc-1), found in Caenorhabditis elegans.